The chain runs to 168 residues: Protein OPG162 (168 aa).

At 1 to 14 (MKSLNRQTVSRFKK) the chain is on the intravirion side. The helical transmembrane segment at 15–37 (LSVPAAIMMILSTIISGIGTFLH) threads the bilayer. Topologically, residues 38–168 (YKEELMPSAC…SVLCVKKFYK (131 aa)) are virion surface. Residues 54–163 (YDKHCYLDTN…CKSTQSVLCV (110 aa)) form the C-type lectin domain. 2 cysteine pairs are disulfide-bonded: C75-C162 and C141-C154. An N-linked (GlcNAc...) asparagine; by host glycan is attached at N133.

Belongs to the orthopoxvirus OPG162 protein family. In terms of assembly, interacts with protein OPG161. Interacts with protein OPG164. Interacts with protein OPG190.

The protein resides in the virion membrane. Its subcellular location is the host Golgi apparatus. Its function is as follows. Forms a complex with OPG162 and OPG190 to coordinate the incorporation of OPG164 into wrapped enveloped virion (EV) membranes and, subsequently, the production of actin tails. Therefore plays an essential role in efficient cell-to-cell spread of viral particles. The sequence is that of Protein OPG162 (OPG162) from Vaccinia virus (strain Western Reserve) (VACV).